Consider the following 896-residue polypeptide: Isoleucine--tRNA ligase (896 aa).

Positions Pro-57–His-67 match the 'HIGH' region motif. Glu-543 is an L-isoleucyl-5'-AMP binding site. Residues Lys-584–Ser-588 carry the 'KMSKS' region motif. Lys-587 provides a ligand contact to ATP. Cys-869, Cys-872, Cys-885, and Cys-888 together coordinate Zn(2+).

It belongs to the class-I aminoacyl-tRNA synthetase family. IleS type 1 subfamily. Monomer. Zn(2+) is required as a cofactor.

It is found in the cytoplasm. The enzyme catalyses tRNA(Ile) + L-isoleucine + ATP = L-isoleucyl-tRNA(Ile) + AMP + diphosphate. Functionally, catalyzes the attachment of isoleucine to tRNA(Ile). As IleRS can inadvertently accommodate and process structurally similar amino acids such as valine, to avoid such errors it has two additional distinct tRNA(Ile)-dependent editing activities. One activity is designated as 'pretransfer' editing and involves the hydrolysis of activated Val-AMP. The other activity is designated 'posttransfer' editing and involves deacylation of mischarged Val-tRNA(Ile). The polypeptide is Isoleucine--tRNA ligase (Acholeplasma laidlawii (strain PG-8A)).